The primary structure comprises 206 residues: Large ribosomal subunit protein uL13w (206 aa).

This sequence belongs to the universal ribosomal protein uL13 family.

This is Large ribosomal subunit protein uL13w (RPL13AD) from Arabidopsis thaliana (Mouse-ear cress).